The primary structure comprises 782 residues: Gelsolin (782 aa).

A signal peptide spans 1–27; that stretch reads MAPHRPAPALLCALSLALCALSLPVRA. Residues 53-176 form an actin-severing region; the sequence is VVEHPEFLKA…YKKGGVASGF (124 aa). The Gelsolin-like 1 repeat unit spans residues 76-158; that stretch reads FDLVPVPTNL…VQGFESATFL (83 aa). Tyrosine 86 is subject to Phosphotyrosine; by SRC; in vitro. Residues glycine 92, aspartate 93, glutamate 124, aspartate 136, glycine 141, and alanine 143 each coordinate Ca(2+). An actin-actin interfilament contact point region spans residues 123 to 126; the sequence is DESG. Residue 162 to 169 coordinates a 1,2-diacyl-sn-glycero-3-phospho-(1D-myo-inositol-4,5-bisphosphate); the sequence is KSGLKYKK. Valine 172 provides a ligand contact to Ca(2+). Residue 188 to 196 participates in a 1,2-diacyl-sn-glycero-3-phospho-(1D-myo-inositol-4,5-bisphosphate) binding; the sequence is RLFQVKGRR. One copy of the Gelsolin-like 2 repeat lies at 198–270; it reads VRATEVPVSW…SEEGTEPEAM (73 aa). Positions 213 and 214 each coordinate Ca(2+). Cysteines 215 and 228 form a disulfide. Glutamate 236 serves as a coordination point for Ca(2+). The span at 247-262 shows a compositional bias: basic and acidic residues; the sequence is IRDNERSGRARVHVSE. The disordered stretch occupies residues 247 to 285; that stretch reads IRDNERSGRARVHVSEEGTEPEAMLQVLGPKPALPAGTE. Ca(2+) contacts are provided by aspartate 286, glutamate 329, aspartate 330, and glutamate 354. The stretch at 317 to 389 is one Gelsolin-like 3 repeat; the sequence is DENPFAQGAL…LPEGGETPLF (73 aa). Tyrosine 409 carries the phosphotyrosine; by SRC; in vitro modification. The actin-binding, Ca-sensitive stretch occupies residues 434–782; it reads AAQHGMDDDG…LDRAMAELAA (349 aa). Residues 455 to 536 form a Gelsolin-like 4 repeat; it reads SNKVPVDPAT…VQGKEPAHLM (82 aa). At tyrosine 465 the chain carries Phosphotyrosine; by SRC. 7 residues coordinate Ca(2+): glycine 471, aspartate 472, glutamate 502, aspartate 514, glycine 519, proline 521, and threonine 551. Residues 576-642 form a Gelsolin-like 5 repeat; sequence TRAVEVLPKA…AEGSEPDGFW (67 aa). Position 584 is an N6-acetyllysine (lysine 584). Ca(2+) is bound by residues asparagine 591 and aspartate 592. Tyrosine 603 is subject to Phosphotyrosine; by SRC; in vitro. Residue glutamate 614 participates in Ca(2+) binding. Tyrosine 651 carries the post-translational modification Phosphotyrosine; by SRC; in vitro. A Gelsolin-like 6 repeat occupies 681-756; sequence IEEVPGELMQ…VKQGFEPPSF (76 aa). The Ca(2+) site is built by aspartate 696, aspartate 697, and glutamate 719. The residue at position 742 (threonine 742) is a Phosphothreonine.

This sequence belongs to the villin/gelsolin family. As to quaternary structure, binds to actin and to fibronectin. Identified in a complex composed of ACTA1, COBL, GSN and TMSB4X. Interacts with the inactive form of EIF2AK2/PKR. Interacts with FLII. Phosphorylation on Tyr-86, Tyr-409, Tyr-465, Tyr-603 and Tyr-651 in vitro is induced in presence of phospholipids. Phagocytic cells, platelets, fibroblasts, nonmuscle cells, smooth and skeletal muscle cells.

Its subcellular location is the cytoplasm. The protein localises to the cytoskeleton. It localises to the secreted. In terms of biological role, calcium-regulated, actin-modulating protein that binds to the plus (or barbed) ends of actin monomers or filaments, preventing monomer exchange (end-blocking or capping). It can promote the assembly of monomers into filaments (nucleation) as well as sever filaments already formed. Plays a role in ciliogenesis. This chain is Gelsolin (GSN), found in Homo sapiens (Human).